A 531-amino-acid polypeptide reads, in one-letter code: Polyamine aminopropyltransferase 1 (531 aa).

A run of 7 helical transmembrane segments spans residues 27–47 (FLLLLAVFLCAACGLVYELAL), 59–79 (VLQTSVVISVMVFAMGVGSLA), 96–116 (GVLALVGGLSVLMLYAAFAWL), 122–142 (AMIVVSLVVGLLIGAEIPLLM), 160–180 (MFAVDYIGALVGGLCFPLFLL), 188–208 (GALVVGVVNAVAGVIVVVFIF), and 218–238 (AGLLAGVALVLAALGTTYVLA). The segment at 205-476 (VFIFRRQTGR…VLARPGTEAP (272 aa)) is spermidine synthase. The PABS domain occupies 233-471 (TTYVLADDLE…GNWGFVLARP (239 aa)). Gln263 contacts S-methyl-5'-thioadenosine. Positions 298 and 320 each coordinate spermidine. Residues Glu340 and 374–375 (DA) contribute to the S-methyl-5'-thioadenosine site. Asp392 serves as the catalytic Proton acceptor.

Belongs to the spermidine/spermine synthase family. In terms of assembly, homodimer or homotetramer.

It is found in the cell membrane. It catalyses the reaction S-adenosyl 3-(methylsulfanyl)propylamine + putrescine = S-methyl-5'-thioadenosine + spermidine + H(+). It functions in the pathway amine and polyamine biosynthesis; spermidine biosynthesis; spermidine from putrescine: step 1/1. Functionally, catalyzes the irreversible transfer of a propylamine group from the amino donor S-adenosylmethioninamine (decarboxy-AdoMet) to putrescine (1,4-diaminobutane) to yield spermidine. The protein is Polyamine aminopropyltransferase 1 of Streptomyces coelicolor (strain ATCC BAA-471 / A3(2) / M145).